Here is a 371-residue protein sequence, read N- to C-terminus: Leu/Ile/Val-binding protein homolog 1 (371 aa).

The N-terminal stretch at 1–23 is a signal peptide; sequence MRKTLFSGVALAAVIAFGGSAWA.

Belongs to the leucine-binding protein family.

Component of an amino-acid transport system. This chain is Leu/Ile/Val-binding protein homolog 1, found in Brucella melitensis biotype 1 (strain ATCC 23456 / CCUG 17765 / NCTC 10094 / 16M).